We begin with the raw amino-acid sequence, 267 residues long: Tryptophan synthase alpha chain (267 aa).

Active-site proton acceptor residues include glutamate 49 and aspartate 60.

The protein belongs to the TrpA family. In terms of assembly, tetramer of two alpha and two beta chains.

It carries out the reaction (1S,2R)-1-C-(indol-3-yl)glycerol 3-phosphate + L-serine = D-glyceraldehyde 3-phosphate + L-tryptophan + H2O. It participates in amino-acid biosynthesis; L-tryptophan biosynthesis; L-tryptophan from chorismate: step 5/5. Its function is as follows. The alpha subunit is responsible for the aldol cleavage of indoleglycerol phosphate to indole and glyceraldehyde 3-phosphate. In Cyanothece sp. (strain PCC 7425 / ATCC 29141), this protein is Tryptophan synthase alpha chain.